A 130-amino-acid chain; its full sequence is Protein CPn_0713/CP_0033/CPj0713/CpB0740 (130 aa).

The protein belongs to the chlamydial CPn_0713/CT_663/TC_0034 family.

The sequence is that of Protein CPn_0713/CP_0033/CPj0713/CpB0740 from Chlamydia pneumoniae (Chlamydophila pneumoniae).